The chain runs to 79 residues: Acyl carrier protein (79 aa).

The Carrier domain maps to 2–77; it reads DNIEQRVKKI…QAIDYATAHV (76 aa). At serine 37 the chain carries O-(pantetheine 4'-phosphoryl)serine.

The protein belongs to the acyl carrier protein (ACP) family. In terms of processing, 4'-phosphopantetheine is transferred from CoA to a specific serine of apo-ACP by AcpS. This modification is essential for activity because fatty acids are bound in thioester linkage to the sulfhydryl of the prosthetic group.

Its subcellular location is the cytoplasm. It functions in the pathway lipid metabolism; fatty acid biosynthesis. Functionally, carrier of the growing fatty acid chain in fatty acid biosynthesis. This Cupriavidus pinatubonensis (strain JMP 134 / LMG 1197) (Cupriavidus necator (strain JMP 134)) protein is Acyl carrier protein.